We begin with the raw amino-acid sequence, 391 residues long: Chalcone synthase 2 (391 aa).

Cys164 is a catalytic residue.

It belongs to the thiolase-like superfamily. Chalcone/stilbene synthases family.

The catalysed reaction is (E)-4-coumaroyl-CoA + 3 malonyl-CoA + 3 H(+) = 2',4,4',6'-tetrahydroxychalcone + 3 CO2 + 4 CoA. It functions in the pathway secondary metabolite biosynthesis; flavonoid biosynthesis. The primary product of this enzyme is 4,2',4',6'-tetrahydroxychalcone (also termed naringenin-chalcone or chalcone) which can under specific conditions spontaneously isomerize into naringenin. The protein is Chalcone synthase 2 (CHS2) of Citrus sinensis (Sweet orange).